A 485-amino-acid polypeptide reads, in one-letter code: Probable outer membrane usher protein LpfC' (485 aa).

This sequence belongs to the fimbrial export usher family.

It is found in the cell outer membrane. In terms of biological role, part of the lpfABCC'DE fimbrial operon. LP fimbriae may participate in the interaction with eukaryotic cells by assisting in microcolony formation. Could be involved in the export and assembly of the fimbrial subunits across the outer membrane. The sequence is that of Probable outer membrane usher protein LpfC' (lpfC') from Escherichia coli O157:H7.